Here is a 463-residue protein sequence, read N- to C-terminus: Glycine--tRNA ligase (463 aa).

Residues arginine 98 and glutamate 174 each coordinate substrate. Residues 206 to 208 (RNE), 216 to 221 (FRTREF), 290 to 291 (EL), and 334 to 337 (GADR) contribute to the ATP site. 221–225 (FEQME) contributes to the substrate binding site. 330–334 (EPSLG) contributes to the substrate binding site.

This sequence belongs to the class-II aminoacyl-tRNA synthetase family. In terms of assembly, homodimer.

It is found in the cytoplasm. The enzyme catalyses tRNA(Gly) + glycine + ATP = glycyl-tRNA(Gly) + AMP + diphosphate. In terms of biological role, catalyzes the attachment of glycine to tRNA(Gly). This chain is Glycine--tRNA ligase, found in Staphylococcus haemolyticus (strain JCSC1435).